The chain runs to 272 residues: 3-methyl-2-oxobutanoate hydroxymethyltransferase (272 aa).

2 residues coordinate Mg(2+): aspartate 51 and aspartate 90. 3-methyl-2-oxobutanoate is bound by residues 51 to 52 (DS), aspartate 90, and lysine 118. Glutamate 120 contacts Mg(2+). Glutamate 187 acts as the Proton acceptor in catalysis.

Belongs to the PanB family. As to quaternary structure, homodecamer; pentamer of dimers. Mg(2+) serves as cofactor.

It is found in the cytoplasm. It catalyses the reaction 3-methyl-2-oxobutanoate + (6R)-5,10-methylene-5,6,7,8-tetrahydrofolate + H2O = 2-dehydropantoate + (6S)-5,6,7,8-tetrahydrofolate. It participates in cofactor biosynthesis; (R)-pantothenate biosynthesis; (R)-pantoate from 3-methyl-2-oxobutanoate: step 1/2. Functionally, catalyzes the reversible reaction in which hydroxymethyl group from 5,10-methylenetetrahydrofolate is transferred onto alpha-ketoisovalerate to form ketopantoate. The chain is 3-methyl-2-oxobutanoate hydroxymethyltransferase from Xylella fastidiosa (strain 9a5c).